We begin with the raw amino-acid sequence, 122 residues long: Putative 2'-deoxynucleoside 5'-phosphate N-hydrolase 1 (122 aa).

Substrate is bound by residues 4 to 10 (FLSGSIR), Y19, H37, E83, and 105 to 107 (SAM).

Belongs to the 2'-deoxynucleoside 5'-phosphate N-hydrolase 1 family. As to quaternary structure, monomer and homodimer.

It carries out the reaction a pyrimidine 2'-deoxyribonucleoside 5'-phosphate + H2O = a pyrimidine nucleobase + 2-deoxy-D-ribose 5-phosphate. The catalysed reaction is a purine 2'-deoxyribonucleoside 5'-phosphate + H2O = a purine nucleobase + 2-deoxy-D-ribose 5-phosphate. Catalyzes the cleavage of the N-glycosidic bond of deoxyribonucleoside 5'-monophosphates to yield deoxyribose 5-phosphate and a purine or pyrimidine base. This chain is Putative 2'-deoxynucleoside 5'-phosphate N-hydrolase 1, found in Methanococcoides burtonii (strain DSM 6242 / NBRC 107633 / OCM 468 / ACE-M).